The following is a 213-amino-acid chain: Superoxide dismutase [Fe] (213 aa).

Fe cation contacts are provided by His26, His73, Asp156, and His160.

Belongs to the iron/manganese superoxide dismutase family. Homodimer. The cofactor is Fe cation.

It catalyses the reaction 2 superoxide + 2 H(+) = H2O2 + O2. Functionally, destroys superoxide anion radicals which are normally produced within the cells and which are toxic to biological systems. This chain is Superoxide dismutase [Fe] (sodB), found in Helicobacter pylori (strain ATCC 700392 / 26695) (Campylobacter pylori).